We begin with the raw amino-acid sequence, 567 residues long: Formate--tetrahydrofolate ligase (567 aa).

Position 76–83 (76–83 (TPAGEGKT)) interacts with ATP.

This sequence belongs to the formate--tetrahydrofolate ligase family.

The enzyme catalyses (6S)-5,6,7,8-tetrahydrofolate + formate + ATP = (6R)-10-formyltetrahydrofolate + ADP + phosphate. It participates in one-carbon metabolism; tetrahydrofolate interconversion. This is Formate--tetrahydrofolate ligase from Sinorhizobium medicae (strain WSM419) (Ensifer medicae).